We begin with the raw amino-acid sequence, 89 residues long: Bacterial microcompartment shell vertex protein GrpN (89 aa).

A BMV domain is found at 1 to 83 (MYLGKVIGTV…IDAAVVGIVD (83 aa)).

This sequence belongs to the CcmL/EutN family. Homopentamer with a small central pore.

Its subcellular location is the bacterial microcompartment. Its function is as follows. Probably forms vertices in the bacterial microcompartment (BMC) predicted to be involved in glycyl radical-based 1,2-propanediol metabolism in this organism. The protein is Bacterial microcompartment shell vertex protein GrpN of Rhodospirillum rubrum (strain F11).